The primary structure comprises 345 residues: N-acetyl-gamma-glutamyl-phosphate reductase (345 aa).

The active site involves Cys-149.

Belongs to the NAGSA dehydrogenase family. Type 1 subfamily.

The protein resides in the cytoplasm. The catalysed reaction is N-acetyl-L-glutamate 5-semialdehyde + phosphate + NADP(+) = N-acetyl-L-glutamyl 5-phosphate + NADPH + H(+). It functions in the pathway amino-acid biosynthesis; L-arginine biosynthesis; N(2)-acetyl-L-ornithine from L-glutamate: step 3/4. Catalyzes the NADPH-dependent reduction of N-acetyl-5-glutamyl phosphate to yield N-acetyl-L-glutamate 5-semialdehyde. This chain is N-acetyl-gamma-glutamyl-phosphate reductase, found in Marinobacter nauticus (strain ATCC 700491 / DSM 11845 / VT8) (Marinobacter aquaeolei).